We begin with the raw amino-acid sequence, 114 residues long: ATP-dependent Clp protease adapter protein ClpS (114 aa).

Belongs to the ClpS family. Binds to the N-terminal domain of the chaperone ClpA.

Its function is as follows. Involved in the modulation of the specificity of the ClpAP-mediated ATP-dependent protein degradation. The protein is ATP-dependent Clp protease adapter protein ClpS of Bdellovibrio bacteriovorus (strain ATCC 15356 / DSM 50701 / NCIMB 9529 / HD100).